The chain runs to 308 residues: tRNA dimethylallyltransferase (308 aa).

Glycine 14–serine 21 is an ATP binding site. Threonine 16–serine 21 serves as a coordination point for substrate. Residues aspartate 39–glutamine 42 are interaction with substrate tRNA.

It belongs to the IPP transferase family. Monomer. Requires Mg(2+) as cofactor.

The enzyme catalyses adenosine(37) in tRNA + dimethylallyl diphosphate = N(6)-dimethylallyladenosine(37) in tRNA + diphosphate. Catalyzes the transfer of a dimethylallyl group onto the adenine at position 37 in tRNAs that read codons beginning with uridine, leading to the formation of N6-(dimethylallyl)adenosine (i(6)A). The polypeptide is tRNA dimethylallyltransferase (Bradyrhizobium sp. (strain ORS 278)).